The following is a 292-amino-acid chain: Aquaporin-3 (292 aa).

Residues Met-1 to Gln-24 are Cytoplasmic-facing. A helical membrane pass occupies residues Ala-25–Ser-42. Topologically, residues Val-43–Phe-56 are extracellular. Residues Leu-57–Ala-74 form a helical membrane-spanning segment. Residues Gly-75 to Ser-78 lie on the Cytoplasmic side of the membrane. The discontinuously helical intramembrane region spans Gly-79–Phe-92. Positions Asn-83 to Ala-85 match the NPA 1 motif. At Leu-93 to Lys-100 the chain is on the cytoplasmic side. The helical transmembrane segment at Leu-101–Gly-121 threads the bilayer. Residues Leu-122–Asn-159 lie on the Extracellular side of the membrane. Asn-141 carries N-linked (GlcNAc...) asparagine glycosylation. The chain crosses the membrane as a helical span at residues Gly-160–Ala-177. The Cytoplasmic segment spans residues Ile-178–Gly-189. The helical transmembrane segment at Leu-190–Met-206 threads the bilayer. Over Gly-207 to Ser-210 the chain is Extracellular. The discontinuously helical intramembrane region spans Gly-211–Leu-224. The NPA 2 motif lies at Asn-215–Ala-217. Topologically, residues Phe-225–Trp-242 are extracellular. A helical transmembrane segment spans residues Trp-243–Met-264. Residues Ile-265–Ile-292 are Cytoplasmic-facing.

The protein belongs to the MIP/aquaporin (TC 1.A.8) family. As to quaternary structure, homotetramer; each monomer provides an independent glycerol/water pore. Could also exist in other oligomeric states. In terms of tissue distribution, detected in principal cells in collecting ducts in kidney medulla (at protein level). Renal medulla and colon. Predominantly in the inner medulla. Expressed in basal layer of epidermal keratinocytes.

The protein localises to the cell membrane. Its subcellular location is the basolateral cell membrane. It catalyses the reaction glycerol(in) = glycerol(out). It carries out the reaction H2O(in) = H2O(out). The enzyme catalyses urea(in) = urea(out). The catalysed reaction is H2O2(out) = H2O2(in). In terms of biological role, aquaglyceroporins form homotetrameric transmembrane channels, with each monomer independently mediating glycerol and water transport across the plasma membrane along their osmotic gradient. Could also be permeable to urea. Also participates in cell permeability to H2O2 and H2O2-mediated signaling. In skin, transports glycerol to the epidermis and stratum corneum, where it maintains hydration, elasticity, and supports lipid biosynthesis for barrier repair. In kidney, contributes to the reabsorption of water, helping the body maintain proper fluid balance. This is Aquaporin-3 from Mus musculus (Mouse).